The sequence spans 183 residues: MDHLTKEQIAEFREAFNLFDKDGDGTITSKELGTVMGSLGQSPTEAELKKMVEEVDADGSGSIEFEEFLGLLARKLRDTGAEDDIRDAFRVFDKDQNGFITPDELRHVMANLSDPLSDDELADMLHEADSDGDGQINYNEFLKVMMAKRRQNMMEGHGSGGHRSSNSHKKSGCCGPNSSCTIL.

EF-hand domains follow at residues 7-42 (EQIA…LGQS), 43-78 (PTEA…KLRD), 80-115 (GAED…LSDP), and 116-151 (LSDD…KRRQ). Ca(2+) is bound by residues Asp20, Asp22, Asp24, Thr26, Glu31, Asp56, Asp58, Ser60, Ser62, Glu67, Asp93, Asp95, Asn97, Glu104, Asp129, Asp131, Asp133, Gln135, and Glu140. Residues 154–183 (MEGHGSGGHRSSNSHKKSGCCGPNSSCTIL) form a disordered region. 2 S-palmitoyl cysteine lipidation sites follow: Cys173 and Cys174. Cys180 carries the cysteine methyl ester modification. The S-farnesyl cysteine moiety is linked to residue Cys180. Positions 181–183 (TIL) are cleaved as a propeptide — removed in mature form.

It belongs to the calmodulin family.

The protein resides in the membrane. In terms of biological role, potential calcium sensor. The protein is Calmodulin-like protein 3 (CML3) of Oryza sativa subsp. japonica (Rice).